The primary structure comprises 25 residues: Histone H1.1 (25 aa).

The H15 domain maps to M1–E25. A disordered region spans residues M1–E25. Basic and acidic residues predominate over residues L9–E25.

It is found in the nucleus. The protein resides in the chromosome. In terms of biological role, histones H1 are necessary for the condensation of nucleosome chains into higher-order structures. This is Histone H1.1 from Triticum aestivum (Wheat).